The chain runs to 951 residues: MATGTGKHKLLSTGPTEPWSIREKLCLASSVMRSGDQNWVSVSRAIKPFAEPGRPPDWFSQKHCASQYSELLETTETPKRKRGEKGEVVETVEDVIVRKLTAERVEELKKVIKETQERYRRLKRDAELIQAGHMDSRLDELCNDIAMKKKLEEEEAEVKRKATDAAYQARQAVKTPPRRLPTVMVRSPVDSASPGGDYPLGDLTPTTMEEATSGVTPGTLPSTPVTSFPGIPDTLPPGSAPLEAPMTPITDDSPQKKMLGQKATPPPSPLLSELLKKGSLLPTSPRLVNESEMPVPPGHLNSTGVLLEVGGVLPMIHGGEIQPTTSAVAASPAASGAPTLSRLLEAGPTQFTTPLPSFTTVASEPPVKLVPPPVESVSQATIVMMPALPAPSSAAAVSTSESGAPVSQPEPCVPLEAVGDPHTVTVSMDSNEISMIINSIKEECFRSGVAEAPGGSKAPSIDGKEDLDLAEKMDIAVSYTGEELDFETVGDIIAIIEDKVDDHPEVLDVAAVEAALSFCEENDDPQSLPGPWEHPIQQERDKPVPLPAPEMTVKQERLDFEESENKGLHDLVDIRDSGVEIKVEPTEPEPGMSGAEIVAGVGPVPSMEPPELRSQDSDEEPRSSAAGDIGEADGSSGKGDERPLSAVKTEASPESMLSPSHGSNLIEDPLEAETQHKFEMSDSLKEESGTIFGSQIKDAPGDDEEEDGVSEAASLEEPKEEDQGEGYLSEMDNEPPVSESDDGFSIHNATLQSHTLADSIPSSPASSQFSVCSEDQEAIQAQKIWKKAIMLVWRAAANHRYANVFLQPVTDDIAPGYHSIVQRPMDLSTIKKNIENGLIRSTAEFQRDIMLMFQNAVMYNSSDHDVYHMAVEMQRDVLEQIQQFLATQLIMQTSESGISAKSLRGRDSTRKQDASEKDSVPMGSPAFLLSLFDGGTRGRRCAIEADMKMKK.

Lys85 is subject to N6-acetyllysine. A coiled-coil region spans residues 97-171 (VRKLTAERVE…ATDAAYQARQ (75 aa)). Residues 161–273 (KATDAAYQAR…TPPPSPLLSE (113 aa)) form a disordered region. Residues 204–226 (TPTTMEEATSGVTPGTLPSTPVT) are compositionally biased toward polar residues. Residues Ser456 and Ser460 each carry the phosphoserine modification. Residues 520–547 (EENDDPQSLPGPWEHPIQQERDKPVPLP) form a disordered region. Lys542 is covalently cross-linked (Glycyl lysine isopeptide (Lys-Gly) (interchain with G-Cter in SUMO2)). Lys554 bears the N6-acetyllysine; alternate mark. Residue Lys554 forms a Glycyl lysine isopeptide (Lys-Gly) (interchain with G-Cter in SUMO1); alternate linkage. Lys554 is covalently cross-linked (Glycyl lysine isopeptide (Lys-Gly) (interchain with G-Cter in SUMO2); alternate). Residue Lys582 forms a Glycyl lysine isopeptide (Lys-Gly) (interchain with G-Cter in SUMO2) linkage. The tract at residues 584-745 (EPTEPEPGMS…PVSESDDGFS (162 aa)) is disordered. A compositionally biased stretch (basic and acidic residues) spans 610 to 622 (PELRSQDSDEEPR). Lys648 is covalently cross-linked (Glycyl lysine isopeptide (Lys-Gly) (interchain with G-Cter in SUMO2)). Ser652 is subject to Phosphoserine. The segment covering 673-688 (ETQHKFEMSDSLKEES) has biased composition (basic and acidic residues). A Glycyl lysine isopeptide (Lys-Gly) (interchain with G-Cter in SUMO2) cross-link involves residue Lys685. Phosphoserine is present on residues Ser694, Ser710, and Ser714. Positions 779 to 884 (IQAQKIWKKA…RDVLEQIQQF (106 aa)) constitute a Bromo domain. The segment at 900-922 (AKSLRGRDSTRKQDASEKDSVPM) is disordered. A compositionally biased stretch (basic and acidic residues) spans 904-919 (RGRDSTRKQDASEKDS).

In terms of assembly, component of the NuA4 histone acetyltransferase complex which contains the catalytic subunit KAT5/TIP60 and the subunits EP400, TRRAP/PAF400, BRD8/SMAP, EPC1, DMAP1/DNMAP1, RUVBL1/TIP49, RUVBL2, ING3, actin, ACTL6A/BAF53A, MORF4L1/MRG15, MORF4L2/MRGX, MRGBP, YEATS4/GAS41, VPS72/YL1 and MEAF6. Component of a NuA4-related complex which contains EP400, TRRAP/PAF400, SRCAP, BRD8/SMAP, EPC1, DMAP1/DNMAP1, RUVBL1/TIP49, RUVBL2, actin, ACTL6A/BAF53A, VPS72 and YEATS4/GAS41. BRD8 isoform 2 interacts with RXRA/NR2B1 and THRB/ERBA2. Component of a SWR1-like complex.

It is found in the nucleus. In terms of biological role, may act as a coactivator during transcriptional activation by hormone-activated nuclear receptors (NR). Stimulates transcriptional activation by AR/DHTR, ESR1/NR3A1, RXRA/NR2B1 and THRB/ERBA2. Component of the NuA4 histone acetyltransferase (HAT) complex which is involved in transcriptional activation of select genes principally by acetylation of nucleosomal histones H4 and H2A. This modification may both alter nucleosome - DNA interactions and promote interaction of the modified histones with other proteins which positively regulate transcription. This complex may be required for the activation of transcriptional programs associated with oncogene and proto-oncogene mediated growth induction, tumor suppressor mediated growth arrest and replicative senescence, apoptosis, and DNA repair. NuA4 may also play a direct role in DNA repair when recruited to sites of DNA damage. Component of a SWR1-like complex that specifically mediates the removal of histone H2A.Z/H2AZ1 from the nucleosome. The protein is Bromodomain-containing protein 8 (Brd8) of Mus musculus (Mouse).